The sequence spans 87 residues: Long neurotoxin homolog (87 aa).

The signal sequence occupies residues 1–21 (MKTLLLTLVVVTIVCLDLGYT). Cystine bridges form between Cys24/Cys47, Cys27/Cys32, Cys40/Cys64, Cys68/Cys80, and Cys81/Cys86.

In terms of tissue distribution, expressed by the venom gland.

The protein localises to the secreted. In terms of biological role, inhibits carbachol-induced muscle contraction in a reversible manner. This chain is Long neurotoxin homolog, found in Bungarus multicinctus (Many-banded krait).